Here is a 551-residue protein sequence, read N- to C-terminus: UvrABC system protein C (551 aa).

The GIY-YIG domain maps to 12 to 87 (EKPGVYIFKN…IFKHKPKYNI (76 aa)). Residues 193–228 (EFVKDYIEQKMNYHSKMLDFENAAKYRDLLLSFEKL) enclose the UVR domain.

It belongs to the UvrC family. Interacts with UvrB in an incision complex.

It localises to the cytoplasm. The UvrABC repair system catalyzes the recognition and processing of DNA lesions. UvrC both incises the 5' and 3' sides of the lesion. The N-terminal half is responsible for the 3' incision and the C-terminal half is responsible for the 5' incision. This chain is UvrABC system protein C, found in Thermosipho africanus (strain TCF52B).